The chain runs to 229 residues: Large ribosomal subunit protein uL1 (229 aa).

It belongs to the universal ribosomal protein uL1 family. Part of the 50S ribosomal subunit.

Its function is as follows. Binds directly to 23S rRNA. The L1 stalk is quite mobile in the ribosome, and is involved in E site tRNA release. Functionally, protein L1 is also a translational repressor protein, it controls the translation of the L11 operon by binding to its mRNA. The chain is Large ribosomal subunit protein uL1 from Streptococcus equi subsp. equi (strain 4047).